The sequence spans 541 residues: Membrane protein insertase YidC (541 aa).

The next 5 helical transmembrane spans lie at 7 to 27 (LLVI…QLDY), 346 to 368 (IVQN…LYPL), 416 to 436 (LGGC…YWTF), 454 to 474 (LSAQ…MFLL), and 495 to 515 (PLIF…YWLV).

This sequence belongs to the OXA1/ALB3/YidC family. Type 1 subfamily. In terms of assembly, interacts with the Sec translocase complex via SecD. Specifically interacts with transmembrane segments of nascent integral membrane proteins during membrane integration.

Its subcellular location is the cell inner membrane. Required for the insertion and/or proper folding and/or complex formation of integral membrane proteins into the membrane. Involved in integration of membrane proteins that insert both dependently and independently of the Sec translocase complex, as well as at least some lipoproteins. Aids folding of multispanning membrane proteins. This is Membrane protein insertase YidC from Pasteurella multocida (strain Pm70).